A 342-amino-acid chain; its full sequence is tRNA N6-adenosine threonylcarbamoyltransferase (342 aa).

Residues H111 and H115 each contribute to the Fe cation site. Substrate-binding positions include 134 to 138 (LVSGG), D167, G180, and N277. Fe cation is bound at residue D305.

Belongs to the KAE1 / TsaD family. Fe(2+) serves as cofactor.

The protein localises to the cytoplasm. It catalyses the reaction L-threonylcarbamoyladenylate + adenosine(37) in tRNA = N(6)-L-threonylcarbamoyladenosine(37) in tRNA + AMP + H(+). In terms of biological role, required for the formation of a threonylcarbamoyl group on adenosine at position 37 (t(6)A37) in tRNAs that read codons beginning with adenine. Is involved in the transfer of the threonylcarbamoyl moiety of threonylcarbamoyl-AMP (TC-AMP) to the N6 group of A37, together with TsaE and TsaB. TsaD likely plays a direct catalytic role in this reaction. The chain is tRNA N6-adenosine threonylcarbamoyltransferase from Cellvibrio japonicus (strain Ueda107) (Pseudomonas fluorescens subsp. cellulosa).